A 293-amino-acid polypeptide reads, in one-letter code: Large ribosomal subunit protein uL4 (293 aa).

Basic and acidic residues-rich tracts occupy residues 1–14 (MAEELKKTTKEKTP) and 33–55 (KTTEVKKADKLEKVSKPKSESTK). Disordered regions lie at residues 1–72 (MAEE…IKSE) and 130–166 (QRQGTHSTKTRSEVSGGGKKPWKQKGTGRARAGSTRS).

It belongs to the universal ribosomal protein uL4 family. Part of the 50S ribosomal subunit.

One of the primary rRNA binding proteins, this protein initially binds near the 5'-end of the 23S rRNA. It is important during the early stages of 50S assembly. It makes multiple contacts with different domains of the 23S rRNA in the assembled 50S subunit and ribosome. Functionally, forms part of the polypeptide exit tunnel. The chain is Large ribosomal subunit protein uL4 from Mycoplasma mobile (strain ATCC 43663 / 163K / NCTC 11711) (Mesomycoplasma mobile).